Here is a 600-residue protein sequence, read N- to C-terminus: Putative heme-binding protein NP_2262A (600 aa).

H180 contributes to the heme binding site. The tract at residues 261–289 is disordered; sequence TSETGHGGADSQTSSESSGGRPSTDPSHD. Positions 270 to 285 are enriched in polar residues; that stretch reads DSQTSSESSGGRPSTD. An ABM domain is found at 510–598; that stretch reads GTMGMFYTVK…VLADRPRHVF (89 aa).

It in the N-terminal section; belongs to the ChdC family.

This chain is Putative heme-binding protein NP_2262A, found in Natronomonas pharaonis (strain ATCC 35678 / DSM 2160 / CIP 103997 / JCM 8858 / NBRC 14720 / NCIMB 2260 / Gabara) (Halobacterium pharaonis).